The sequence spans 396 residues: Tyrosine--tRNA ligase (396 aa).

Residues 43 to 52 (PSSPDIHLGH) carry the 'HIGH' region motif. The 'KMSKS' region signature appears at 227–231 (KMSKS). Residue K230 coordinates ATP. Positions 338–396 (TGVIDFIILSGLAKSKSEARRLLEQGAVEINSEKISDQNTPVKCGDIIKAGKRRYSKAI) constitute an S4 RNA-binding domain.

This sequence belongs to the class-I aminoacyl-tRNA synthetase family. TyrS type 2 subfamily. In terms of assembly, homodimer.

The protein resides in the cytoplasm. It carries out the reaction tRNA(Tyr) + L-tyrosine + ATP = L-tyrosyl-tRNA(Tyr) + AMP + diphosphate + H(+). Functionally, catalyzes the attachment of tyrosine to tRNA(Tyr) in a two-step reaction: tyrosine is first activated by ATP to form Tyr-AMP and then transferred to the acceptor end of tRNA(Tyr). The polypeptide is Tyrosine--tRNA ligase (Dehalococcoides mccartyi (strain CBDB1)).